A 966-amino-acid polypeptide reads, in one-letter code: Dynamin-like GTPase OPA1, mitochondrial (966 aa).

The N-terminal 86 residues, 1-86, are a transit peptide targeting the mitochondrion; it reads MLRAGSVVTC…GGHGYQQHRT (86 aa). Topologically, residues 87–95 are mitochondrial matrix; that stretch reads FWVARLAAR. The helical transmembrane segment at 96–112 threads the bilayer; sequence LLKLRYILLGSAVGGGY. At 113-776 the chain is on the mitochondrial intermembrane side; it reads TAKKTYDEWK…SVIADMVGPD (664 aa). The segment at 189–217 is disordered; sequence ESALRAPDVPPASAAMADSGDKQFKKSSD. The span at 207–217 shows a compositional bias: basic and acidic residues; sequence SGDKQFKKSSD. Residues 213 to 259 adopt a coiled-coil conformation; it reads KKSSDKEKVDQLQEELLRTQLKYQRMLERLEKENKELRKVVLQKDDK. A Dynamin-type G domain is found at 291-567; the sequence is QDHLPRVVVV…FWKMVRESVE (277 aa). The tract at residues 301–308 is G1 motif; the sequence is GDQSAGKT. Positions 304, 306, 307, 308, 309, and 323 each coordinate GTP. Residue Thr-308 participates in Mg(2+) binding. Residues 327 to 330 are G2 motif; the sequence is MMTR. Residues Thr-329 and Asp-404 each contribute to the Mg(2+) site. Positions 404–407 are G3 motif; that stretch reads DLPG. A G4 motif region spans residues 473-476; it reads TKVD. 3 residues coordinate GTP: Lys-474, Asp-476, and Thr-509. The tract at residues 507–510 is G5 motif; sequence VVTG. Stalk region regions lie at residues 595-842 and 880-934; these read DRNE…IKDT and CNDV…VQLI. The interval 742-862 is paddle region; sequence TDKPQWDAAI…QKALLHCNLC (121 aa). An intramembrane segment occupies 777–787; that stretch reads WKQRWMSWKNR. Residues 788 to 966 lie on the Mitochondrial intermembrane side of the membrane; sequence TPEQHTRNET…AFIEALHKEK (179 aa). A disulfide bridge links Cys-862 with Cys-880. A coiled-coil region spans residues 901–966; it reads RQQLTNTEVR…AFIEALHKEK (66 aa).

It belongs to the TRAFAC class dynamin-like GTPase superfamily. Dynamin/Fzo/YdjA family. Oligomeric complex consisting of membrane-bound and soluble forms of OPA1. In terms of processing, cleaved by OMA1 or YME1L downstream of the transmembrane region in response to different signals to generate soluble forms. Cleaved by OMA1 at position S1 following stress conditions, generating the short soluble form (Dynamin-like GTPase OPA1, short form; S-OPA1).

The protein localises to the mitochondrion inner membrane. It localises to the mitochondrion intermembrane space. The catalysed reaction is GTP + H2O = GDP + phosphate + H(+). Functionally, dynamin-related GTPase that is essential for normal mitochondrial morphology by mediating fusion of the mitochondrial inner membranes, regulating cristae morphology and maintaining respiratory chain function. Exists in two forms: the transmembrane, long form (Dynamin-like GTPase OPA1, long form; L-OPA1), which is tethered to the inner mitochondrial membrane, and the short soluble form (Dynamin-like GTPase OPA1, short form; S-OPA1), which results from proteolytic cleavage and localizes in the intermembrane space. Both forms (L-OPA1 and S-OPA1) cooperate to catalyze the fusion of the mitochondrial inner membrane. The equilibrium between L-OPA1 and S-OPA1 is essential: excess levels of S-OPA1, produced by cleavage by OMA1 following loss of mitochondrial membrane potential, lead to an impaired equilibrium between L-OPA1 and S-OPA1, inhibiting mitochondrial fusion. The balance between L-OPA1 and S-OPA1 also influences cristae shape and morphology. Its role in mitochondrial morphology is required for mitochondrial genome maintenance. Constitutes the transmembrane long form (L-OPA1) that plays a central role in mitochondrial inner membrane fusion and cristae morphology. L-OPA1 and the soluble short form (S-OPA1) form higher-order helical assemblies that coordinate the fusion of mitochondrial inner membranes. Inner membrane-anchored L-OPA1 molecules initiate membrane remodeling by recruiting soluble S-OPA1 to rapidly polymerize into a flexible cylindrical scaffold encaging the mitochondrial inner membrane. Once at the membrane surface, the formation of S-OPA1 helices induce bilayer curvature. OPA1 dimerization through the paddle region, which inserts into cardiolipin-containing membrane, promotes GTP hydrolysis and the helical assembly of a flexible OPA1 lattice on the membrane, which drives membrane curvature and mitochondrial fusion. Plays a role in the maintenance and remodeling of mitochondrial cristae, some invaginations of the mitochondrial inner membrane that provide an increase in the surface area. Probably acts by forming helical filaments at the inside of inner membrane tubes with the shape and dimensions of crista junctions. Its function is as follows. Constitutes the soluble short form (S-OPA1) generated by cleavage by OMA1, which plays a central role in mitochondrial inner membrane fusion and cristae morphology. The transmembrane long form (L-OPA1) and the S-OPA1 form higher-order helical assemblies that coordinate the fusion of mitochondrial inner membranes. Inner membrane-anchored L-OPA1 molecules initiate membrane remodeling by recruiting soluble S-OPA1 to rapidly polymerize into a flexible cylindrical scaffold encaging the mitochondrial inner membrane. Once at the membrane surface, the formation of S-OPA1 helices induce bilayer curvature. OPA1 dimerization through the paddle region, which inserts into cardiolipin-containing membrane, promotes GTP hydrolysis and the helical assembly of a flexible OPA1 lattice on the membrane, which drives membrane curvature and mitochondrial fusion. Excess levels of S-OPA1 produced by cleavage by OMA1 following stress conditions that induce loss of mitochondrial membrane potential, lead to an impaired equilibrium between L-OPA1 and S-OPA1, thereby inhibiting mitochondrial fusion. Plays a role in the maintenance and remodeling of mitochondrial cristae, some invaginations of the mitochondrial inner membrane that provide an increase in the surface area. Probably acts by forming helical filaments at the inside of inner membrane tubes with the shape and dimensions of crista junctions. This chain is Dynamin-like GTPase OPA1, mitochondrial, found in Danio rerio (Zebrafish).